We begin with the raw amino-acid sequence, 29 residues long: VSCEDCPDHCSTQKARAKCDNDKCVCEPI.

Cystine bridges form between C3/C19, C6/C24, and C10/C26.

This sequence belongs to the short scorpion toxin superfamily. Potassium channel inhibitor family. Alpha-KTx 08 subfamily. As to expression, expressed by the venom gland.

Its subcellular location is the secreted. In terms of biological role, specific and potent inhibitor of ClC-2/CLCN2 chloride channel. It slows ClC-2/CLCN2 activation by increasing the latency to first opening by nearly 8-fold but is unable to inhibit open channels, suggesting that this toxin inhibits channel activation gating. This is Potassium channel toxin alpha-KTx 8.3 from Leiurus hebraeus (Hebrew deathstalker scorpion).